The chain runs to 431 residues: Cytochrome c oxidase subunit 3 (431 aa).

7 helical membrane passes run 70-90, 96-116, 132-152, 176-196, 321-341, 356-376, and 408-428; these read IAPL…FGVI, FVIA…SIVF, LVMG…SFFW, VYSY…SGAI, LYFT…EYYF, FLLT…IGII, and LFYW…IYWW.

It belongs to the cytochrome c oxidase subunit 3 family. As to quaternary structure, component of the cytochrome c oxidase (complex IV, CIV), a multisubunit enzyme composed of a catalytic core of 3 subunits and several supernumerary subunits. The complex exists as a monomer or a dimer and forms supercomplexes (SCs) in the inner mitochondrial membrane with ubiquinol-cytochrome c oxidoreductase (cytochrome b-c1 complex, complex III, CIII).

It is found in the mitochondrion inner membrane. The catalysed reaction is 4 Fe(II)-[cytochrome c] + O2 + 8 H(+)(in) = 4 Fe(III)-[cytochrome c] + 2 H2O + 4 H(+)(out). Component of the cytochrome c oxidase, the last enzyme in the mitochondrial electron transport chain which drives oxidative phosphorylation. The respiratory chain contains 3 multisubunit complexes succinate dehydrogenase (complex II, CII), ubiquinol-cytochrome c oxidoreductase (cytochrome b-c1 complex, complex III, CIII) and cytochrome c oxidase (complex IV, CIV), that cooperate to transfer electrons derived from NADH and succinate to molecular oxygen, creating an electrochemical gradient over the inner membrane that drives transmembrane transport and the ATP synthase. Cytochrome c oxidase is the component of the respiratory chain that catalyzes the reduction of oxygen to water. Electrons originating from reduced cytochrome c in the intermembrane space (IMS) are transferred via the dinuclear copper A center (CU(A)) of subunit 2 and heme A of subunit 1 to the active site in subunit 1, a binuclear center (BNC) formed by heme A3 and copper B (CU(B)). The BNC reduces molecular oxygen to 2 water molecules using 4 electrons from cytochrome c in the IMS and 4 protons from the mitochondrial matrix. The protein is Cytochrome c oxidase subunit 3 (cox3) of Dictyostelium citrinum (Slime mold).